The following is a 106-amino-acid chain: Urease subunit beta (106 aa).

Belongs to the urease beta subunit family. Heterotrimer of UreA (gamma), UreB (beta) and UreC (alpha) subunits. Three heterotrimers associate to form the active enzyme.

The protein localises to the cytoplasm. The catalysed reaction is urea + 2 H2O + H(+) = hydrogencarbonate + 2 NH4(+). The protein operates within nitrogen metabolism; urea degradation; CO(2) and NH(3) from urea (urease route): step 1/1. The protein is Urease subunit beta of Acinetobacter baumannii (strain ATCC 17978 / DSM 105126 / CIP 53.77 / LMG 1025 / NCDC KC755 / 5377).